A 425-amino-acid polypeptide reads, in one-letter code: Serine--tRNA ligase (425 aa).

233 to 235 contributes to the L-serine binding site; sequence TAE. 264–266 serves as a coordination point for ATP; that stretch reads RAE. Residue E287 participates in L-serine binding. 351–354 contributes to the ATP binding site; it reads EISS. S387 provides a ligand contact to L-serine.

It belongs to the class-II aminoacyl-tRNA synthetase family. Type-1 seryl-tRNA synthetase subfamily. Homodimer. The tRNA molecule binds across the dimer.

Its subcellular location is the cytoplasm. The catalysed reaction is tRNA(Ser) + L-serine + ATP = L-seryl-tRNA(Ser) + AMP + diphosphate + H(+). It catalyses the reaction tRNA(Sec) + L-serine + ATP = L-seryl-tRNA(Sec) + AMP + diphosphate + H(+). It participates in aminoacyl-tRNA biosynthesis; selenocysteinyl-tRNA(Sec) biosynthesis; L-seryl-tRNA(Sec) from L-serine and tRNA(Sec): step 1/1. In terms of biological role, catalyzes the attachment of serine to tRNA(Ser). Is also able to aminoacylate tRNA(Sec) with serine, to form the misacylated tRNA L-seryl-tRNA(Sec), which will be further converted into selenocysteinyl-tRNA(Sec). The sequence is that of Serine--tRNA ligase from Clostridium botulinum (strain Alaska E43 / Type E3).